A 595-amino-acid chain; its full sequence is Estrogen receptor (595 aa).

The modulating (transactivation AF-1); mediates interaction with MACROD1 stretch occupies residues 1–184; that stretch reads MTMTLHTKAS…AMESAKETRY (184 aa). S10 carries an O-linked (GlcNAc) serine glycan. Residues 35-47 form a required for interaction with NCOA1 region; it reads LERPLGEVYVDGS. Residues 35 to 174 are interaction with DDX5; self-association; it reads LERPLGEVYV…LASTGDKGSM (140 aa). Residues S104 and S106 each carry the phosphoserine; by CDK2 modification. S118 bears the Phosphoserine mark. A disordered region spans residues 149–173; it reads FYRPTSDNRRQSGRERLASTGDKGS. Over residues 154–165 the composition is skewed to basic and acidic residues; sequence SDNRRQSGRERL. Position 167 is a phosphoserine; by CK2 (S167). 2 consecutive NR C4-type zinc fingers follow at residues 185-205 and 221-245; these read CAVCNDYASGYHYGVWSCEGC and CPATNQCTIDKNRRKSCQACRLRKC. Residues 185–250 constitute a DNA-binding region (nuclear receptor); the sequence is CAVCNDYASG…RLRKCYEVGM (66 aa). The tract at residues 185–310 is mediates interaction with DNTTIP2; it reads CAVCNDYASG…TKKNSPALSL (126 aa). Positions 251-310 are hinge; it reads MKGGIRKDRRGGRMLKHKRQRDEGEGRNEVGSSGDVRASNLWPSPLLIKHTKKNSPALSL. A compositionally biased stretch (basic residues) spans 257-269; it reads KDRRGGRMLKHKR. The segment at 257–287 is disordered; that stretch reads KDRRGGRMLKHKRQRDEGEGRNEVGSSGDVR. R260 is subject to Asymmetric dimethylarginine; by PRMT1. The interaction with AKAP13 stretch occupies residues 262–595; the sequence is GRMLKHKRQR…EEAGAFPTTV (334 aa). Residues 264 to 595 form a self-association region; sequence MLKHKRQRDE…EEAGAFPTTV (332 aa). The 237-residue stretch at 311-547 folds into the NR LBD domain; sequence TADQMVSALL…DLLLEMLDAH (237 aa). Residues 311–595 form a transactivation AF-2 region; sequence TADQMVSALL…EEAGAFPTTV (285 aa). E353 and R394 together coordinate 17beta-estradiol. A lipid anchor (S-palmitoyl cysteine) is attached at C447. H524 serves as a coordination point for 17beta-estradiol. Y537 bears the Phosphotyrosine; by Tyr-kinases mark. O-linked (GlcNAc) threonine glycosylation occurs at T571.

This sequence belongs to the nuclear hormone receptor family. NR3 subfamily. Binds DNA as a homodimer. Can form a heterodimer with ESR2. Interacts with coactivator NCOA5. Interacts with PELP1, the interaction is enhanced by 17-beta-estradiol; the interaction increases ESR1 transcriptional activity. Interacts with NCOA7; the interaction is ligand-inducible. Interacts with AKAP13, CUEDC2, HEXIM1, KDM5A, MAP1S, SMARD1, and UBE1C. Interacts with MUC1; the interaction is stimulated by 7 beta-estradiol (E2) and enhances ESR1-mediated transcription. Interacts with DNTTIP2, and UIMC1. Interacts with KMT2D/MLL2. Interacts with ATAD2; the interaction is enhanced by estradiol. Interacts with KIF18A and LDB1. Interacts with RLIM (via its C-terminus). Interacts with MACROD1. Interacts with SH2D4A and PLCG. Interacts with SH2D4A; the interaction blocks binding to PLCG and inhibits estrogen-induced cell proliferation. Interacts with DYNLL1. Interacts with CCDC62; the interaction requires estradiol and appears to enhance the transcription of target genes. Interacts with NR2C1; the interaction prevents homodimerization of ESR1 and suppresses its transcriptional activity and cell growth. Interacts with DNAAF4. Interacts with PRMT2. Interacts with RBFOX2. Interacts with EP300; the interaction is estrogen-dependent and enhanced by CITED1. Interacts with CITED1; the interaction is estrogen-dependent. Interacts with FAM120B, FOXL2, PHB2 and SLC30A9. Interacts with coactivators NCOA3 and NCOA6. Interacts with STK3/MST2 only in the presence of SAV1 and vice-versa. Binds to CSNK1D. Interacts with NCOA2; NCOA2 can interact with ESR1 AF-1 and AF-2 domains simultaneously and mediate their transcriptional synergy. Interacts with DDX5. Interacts with NCOA1; the interaction seems to require a self-association of N-terminal and C-terminal regions. Interacts with ZNF366, DDX17, NFKB1, RELA, SP1 and SP3. Interacts with NRIP1. Interacts with GPER1; the interaction occurs in an estrogen-dependent manner. Interacts with CLOCK and the interaction is stimulated by estrogen. Interacts with TRIP4 (ufmylated); estrogen dependent. Interacts with LMTK3; the interaction phosphorylates ESR1 (in vitro) and protects it against proteasomal degradation. Interacts with CCAR2 (via N-terminus) in a ligand-independent manner. Interacts with ZFHX3. Interacts with SFR1 in a ligand-dependent and -independent manner. Interacts with DCAF13, LATS1 and DCAF1; regulates ESR1 ubiquitination and ubiquitin-mediated proteasomal degradation. Interacts (via DNA-binding domain) with POU4F2 (C-terminus); this interaction increases the estrogen receptor ESR1 transcriptional activity in a DNA- and ligand 17-beta-estradiol-independent manner. Interacts with ESRRB isoform 1. Interacts with UBE3A and WBP2. Interacts with GTF2B. Interacts with RBM39. In the absence of hormonal ligand, interacts with TACC1. Interacts with PI3KR1 or PI3KR2 and PTK2/FAK1. Interacts with SRC. Interacts with BAG1; the interaction is promoted in the absence of estradiol (17-beta-estradiol/E2). Interacts with and ubiquitinated by STUB1; the interaction is promoted in the absence of estradiol (17-beta-estradiol/E2). Interacts with NEDD8. In terms of processing, ubiquitinated; regulated by LATS1 via DCAF1 it leads to ESR1 proteasomal degradation. Deubiquitinated by OTUB1. Ubiquitinated by STUB1/CHIP; in the CA1 hippocampal region following loss of endogenous circulating estradiol (17-beta-estradiol/E2). Ubiquitinated by UBR5, leading to its degradation: UBR5 specifically recognizes and binds ligand-bound ESR1 when it is not associated with coactivators (NCOAs). In presence of NCOAs, the UBR5-degron is not accessible, preventing its ubiquitination and degradation. Phosphorylated by cyclin A/CDK2 and CK1. Phosphorylation probably enhances transcriptional activity. Dephosphorylation at Ser-118 by PPP5C inhibits its transactivation activity. Phosphorylated by LMTK3 (in vitro). Post-translationally, palmitoylated at Cys-447 by ZDHHC7 and ZDHHC21. Palmitoylation is required for plasma membrane targeting and for rapid intracellular signaling via ERK and AKT kinases and cAMP generation, but not for signaling mediated by the nuclear hormone receptor. In terms of processing, dimethylated by PRMT1 at Arg-260. The methylation may favor cytoplasmic localization. Demethylated by JMJD6 at Arg-260.

It localises to the nucleus. Its subcellular location is the cytoplasm. It is found in the golgi apparatus. The protein resides in the cell membrane. Functionally, nuclear hormone receptor. The steroid hormones and their receptors are involved in the regulation of eukaryotic gene expression and affect cellular proliferation and differentiation in target tissues. Ligand-dependent nuclear transactivation involves either direct homodimer binding to a palindromic estrogen response element (ERE) sequence or association with other DNA-binding transcription factors, such as AP-1/c-Jun, c-Fos, ATF-2, Sp1 and Sp3, to mediate ERE-independent signaling. Ligand binding induces a conformational change allowing subsequent or combinatorial association with multiprotein coactivator complexes through LXXLL motifs of their respective components. Mutual transrepression occurs between the estrogen receptor (ER) and NF-kappa-B in a cell-type specific manner. Decreases NF-kappa-B DNA-binding activity and inhibits NF-kappa-B-mediated transcription from the IL6 promoter and displace RELA/p65 and associated coregulators from the promoter. Recruited to the NF-kappa-B response element of the CCL2 and IL8 promoters and can displace CREBBP. Present with NF-kappa-B components RELA/p65 and NFKB1/p50 on ERE sequences. Can also act synergistically with NF-kappa-B to activate transcription involving respective recruitment adjacent response elements; the function involves CREBBP. Can activate the transcriptional activity of TFF1. Also mediates membrane-initiated estrogen signaling involving various kinase cascades. Essential for MTA1-mediated transcriptional regulation of BRCA1 and BCAS3. Maintains neuronal survival in response to ischemic reperfusion injury when in the presence of circulating estradiol (17-beta-estradiol/E2). In Felis catus (Cat), this protein is Estrogen receptor (ESR1).